The sequence spans 232 residues: Chalcone synthase (232 aa).

Cys-7 is an active-site residue.

Belongs to the thiolase-like superfamily. Chalcone/stilbene synthases family.

It catalyses the reaction (E)-4-coumaroyl-CoA + 3 malonyl-CoA + 3 H(+) = 2',4,4',6'-tetrahydroxychalcone + 3 CO2 + 4 CoA. Its pathway is secondary metabolite biosynthesis; flavonoid biosynthesis. Its function is as follows. The primary product of this enzyme is 4,2',4',6'-tetrahydroxychalcone (also termed naringenin-chalcone or chalcone) which can under specific conditions spontaneously isomerize into naringenin. This is Chalcone synthase (CHS) from Malus domestica (Apple).